The chain runs to 436 residues: 3-ketoacyl-CoA thiolase (436 aa).

The active-site Acyl-thioester intermediate is Cys-99. Catalysis depends on proton acceptor residues His-392 and Cys-422.

Belongs to the thiolase-like superfamily. Thiolase family. In terms of assembly, heterotetramer of two alpha chains (FadJ) and two beta chains (FadI).

The protein localises to the cytoplasm. The enzyme catalyses an acyl-CoA + acetyl-CoA = a 3-oxoacyl-CoA + CoA. It participates in lipid metabolism; fatty acid beta-oxidation. Its function is as follows. Catalyzes the final step of fatty acid oxidation in which acetyl-CoA is released and the CoA ester of a fatty acid two carbons shorter is formed. The chain is 3-ketoacyl-CoA thiolase from Salmonella typhimurium (strain LT2 / SGSC1412 / ATCC 700720).